The following is a 657-amino-acid chain: Glycogen debranching enzyme (657 aa).

The active-site Nucleophile is Asp-336. Glu-371 functions as the Proton donor in the catalytic mechanism. The tract at residues 460–479 (ANGEENRDGTNNNYSNNHGK) is disordered.

Belongs to the glycosyl hydrolase 13 family.

The catalysed reaction is Hydrolysis of (1-&gt;6)-alpha-D-glucosidic linkages to branches with degrees of polymerization of three or four glucose residues in limit dextrin.. It participates in glycan degradation; glycogen degradation. In terms of biological role, removes maltotriose and maltotetraose chains that are attached by 1,6-alpha-linkage to the limit dextrin main chain, generating a debranched limit dextrin. In Escherichia coli (strain SMS-3-5 / SECEC), this protein is Glycogen debranching enzyme.